Consider the following 296-residue polypeptide: Ribosomal RNA small subunit methyltransferase H (296 aa).

S-adenosyl-L-methionine contacts are provided by residues 38–40 (GVH), E57, F80, D103, and H110.

Belongs to the methyltransferase superfamily. RsmH family.

It is found in the cytoplasm. The catalysed reaction is cytidine(1402) in 16S rRNA + S-adenosyl-L-methionine = N(4)-methylcytidine(1402) in 16S rRNA + S-adenosyl-L-homocysteine + H(+). Its function is as follows. Specifically methylates the N4 position of cytidine in position 1402 (C1402) of 16S rRNA. The polypeptide is Ribosomal RNA small subunit methyltransferase H (Borreliella burgdorferi (strain ATCC 35210 / DSM 4680 / CIP 102532 / B31) (Borrelia burgdorferi)).